We begin with the raw amino-acid sequence, 306 residues long: Homeobox protein HMX3 (306 aa).

The tract at residues 95 to 181 (HTPRTEVPDK…DKKPCRKKKT (87 aa)) is disordered. Composition is skewed to basic and acidic residues over residues 117-143 (GERD…KSPE) and 153-174 (EEGK…PDKK). A DNA-binding region (homeobox) is located at residues 178 to 237 (KKKTRTVFSRSQVFQLESTFDMKRYLSSSERAGLAASLHLTETQVKIWFQNRRNKWKRQL).

This sequence belongs to the HMX homeobox family.

The protein localises to the nucleus. Functionally, transcription factor involved in specification of neuronal cell types and which is required for inner ear and hypothalamus development. Binds to the 5'-CAAGTG-3' core sequence. May act as a stage-specific inhibitor of anf1 in the anterior neural plate during the development. The sequence is that of Homeobox protein HMX3 (hmx3) from Xenopus laevis (African clawed frog).